The primary structure comprises 155 residues: Large ribosomal subunit protein uL22c (155 aa).

This sequence belongs to the universal ribosomal protein uL22 family. As to quaternary structure, part of the 50S ribosomal subunit.

Its subcellular location is the plastid. It localises to the chloroplast. Its function is as follows. This protein binds specifically to 23S rRNA. The globular domain of the protein is located near the polypeptide exit tunnel on the outside of the subunit, while an extended beta-hairpin is found that lines the wall of the exit tunnel in the center of the 70S ribosome. This chain is Large ribosomal subunit protein uL22c (rpl22), found in Atropa belladonna (Belladonna).